The following is a 161-amino-acid chain: 2-C-methyl-D-erythritol 2,4-cyclodiphosphate synthase (161 aa).

Residues D10 and H12 each coordinate a divalent metal cation. 4-CDP-2-C-methyl-D-erythritol 2-phosphate is bound by residues 10–12 (DVH) and 36–37 (HS). H44 lines the a divalent metal cation pocket. Residues 58-60 (DIG), 134-137 (TTTE), F141, and R144 contribute to the 4-CDP-2-C-methyl-D-erythritol 2-phosphate site.

It belongs to the IspF family. As to quaternary structure, homotrimer. It depends on a divalent metal cation as a cofactor.

It carries out the reaction 4-CDP-2-C-methyl-D-erythritol 2-phosphate = 2-C-methyl-D-erythritol 2,4-cyclic diphosphate + CMP. It participates in isoprenoid biosynthesis; isopentenyl diphosphate biosynthesis via DXP pathway; isopentenyl diphosphate from 1-deoxy-D-xylulose 5-phosphate: step 4/6. In terms of biological role, involved in the biosynthesis of isopentenyl diphosphate (IPP) and dimethylallyl diphosphate (DMAPP), two major building blocks of isoprenoid compounds. Catalyzes the conversion of 4-diphosphocytidyl-2-C-methyl-D-erythritol 2-phosphate (CDP-ME2P) to 2-C-methyl-D-erythritol 2,4-cyclodiphosphate (ME-CPP) with a corresponding release of cytidine 5-monophosphate (CMP). This chain is 2-C-methyl-D-erythritol 2,4-cyclodiphosphate synthase, found in Parabacteroides distasonis (strain ATCC 8503 / DSM 20701 / CIP 104284 / JCM 5825 / NCTC 11152).